Consider the following 138-residue polypeptide: PilB-specific inhibitory protein CpiA (138 aa).

Interacts with PilB but not with TfpB.

Functionally, acts as a PilB inhibitor to control natural transformation. Inhibits type IV pili (T4P) extension by specifically binding and inhibiting the pilus extension ATPase PilB but not TfpB. This activity probably modulates T4P extension under different environmental conditions. This Acinetobacter baylyi (strain ATCC 33305 / BD413 / ADP1) protein is PilB-specific inhibitory protein CpiA.